The sequence spans 378 residues: Uroporphyrinogen decarboxylase (378 aa).

Residues 40–44, aspartate 90, tyrosine 167, serine 222, and histidine 355 each bind substrate; that span reads RQAGR.

It belongs to the uroporphyrinogen decarboxylase family. As to quaternary structure, homodimer.

The protein resides in the cytoplasm. It carries out the reaction uroporphyrinogen III + 4 H(+) = coproporphyrinogen III + 4 CO2. It participates in porphyrin-containing compound metabolism; protoporphyrin-IX biosynthesis; coproporphyrinogen-III from 5-aminolevulinate: step 4/4. In terms of biological role, catalyzes the decarboxylation of four acetate groups of uroporphyrinogen-III to yield coproporphyrinogen-III. This is Uroporphyrinogen decarboxylase from Psychrobacter arcticus (strain DSM 17307 / VKM B-2377 / 273-4).